We begin with the raw amino-acid sequence, 102 residues long: Large ribosomal subunit protein uL24 (102 aa).

This sequence belongs to the universal ribosomal protein uL24 family. Part of the 50S ribosomal subunit.

Functionally, one of two assembly initiator proteins, it binds directly to the 5'-end of the 23S rRNA, where it nucleates assembly of the 50S subunit. One of the proteins that surrounds the polypeptide exit tunnel on the outside of the subunit. The polypeptide is Large ribosomal subunit protein uL24 (Herpetosiphon aurantiacus (strain ATCC 23779 / DSM 785 / 114-95)).